We begin with the raw amino-acid sequence, 149 residues long: Calmodulin (149 aa).

Alanine 2 is subject to N-acetylalanine. EF-hand domains follow at residues 8-43, 44-79, 81-116, and 117-149; these read EQIA…LGQN, PTEA…KMKD, DSEE…LGEK, and LTDE…MMAK. Aspartate 21, aspartate 23, aspartate 25, cysteine 27, glutamate 32, aspartate 57, aspartate 59, asparagine 61, threonine 63, glutamate 68, aspartate 94, aspartate 96, asparagine 98, and glutamate 105 together coordinate Ca(2+). Lysine 116 bears the N6,N6,N6-trimethyllysine mark. Residues aspartate 130, aspartate 132, aspartate 134, glutamine 136, and glutamate 141 each coordinate Ca(2+).

This sequence belongs to the calmodulin family. The N-terminus is blocked.

In terms of biological role, calmodulin mediates the control of a large number of enzymes, ion channels and other proteins by Ca(2+). Among the enzymes to be stimulated by the calmodulin-Ca(2+) complex are a number of protein kinases and phosphatases. In Spinacia oleracea (Spinach), this protein is Calmodulin.